The primary structure comprises 236 residues: Ribosome maturation protein SDO1 homolog (236 aa).

The protein belongs to the SDO1/SBDS family.

The protein is Ribosome maturation protein SDO1 homolog of Pyrococcus abyssi (strain GE5 / Orsay).